The chain runs to 181 residues: Extracellular superoxide dismutase [Cu-Zn] (181 aa).

Positions 1-18 (MMQYLVVSLALCATICSA) are cleaved as a signal peptide. A glycan (N-linked (GlcNAc...) asparagine) is linked at N46. Residues H75, H77, and H92 each coordinate Cu cation. C86 and C175 are disulfide-bonded. Zn(2+) is bound by residues H92, H100, H109, and D112. Residue N119 is glycosylated (N-linked (GlcNAc...) asparagine). H149 serves as a coordination point for Cu cation. N159 is a glycosylation site (N-linked (GlcNAc...) asparagine).

This sequence belongs to the Cu-Zn superoxide dismutase family. The cofactor is Cu cation. Zn(2+) is required as a cofactor. In terms of tissue distribution, expressed at higher levels in females compared to males.

It is found in the secreted. It carries out the reaction 2 superoxide + 2 H(+) = H2O2 + O2. Its function is as follows. Protects the extracellular space from the toxic effects of reactive oxygen intermediates by converting superoxide radicals into hydrogen peroxide and oxygen. This Drosophila melanogaster (Fruit fly) protein is Extracellular superoxide dismutase [Cu-Zn].